Reading from the N-terminus, the 421-residue chain is UDP-N-acetylglucosamine 1-carboxyvinyltransferase 2 (421 aa).

22–23 (KN) is a phosphoenolpyruvate binding site. Residue Arg94 coordinates UDP-N-acetyl-alpha-D-glucosamine. Cys118 functions as the Proton donor in the catalytic mechanism. Residue Cys118 is modified to 2-(S-cysteinyl)pyruvic acid O-phosphothioketal. The UDP-N-acetyl-alpha-D-glucosamine site is built by Asp308 and Ile330.

Belongs to the EPSP synthase family. MurA subfamily.

It localises to the cytoplasm. The catalysed reaction is phosphoenolpyruvate + UDP-N-acetyl-alpha-D-glucosamine = UDP-N-acetyl-3-O-(1-carboxyvinyl)-alpha-D-glucosamine + phosphate. It participates in cell wall biogenesis; peptidoglycan biosynthesis. In terms of biological role, cell wall formation. Adds enolpyruvyl to UDP-N-acetylglucosamine. The polypeptide is UDP-N-acetylglucosamine 1-carboxyvinyltransferase 2 (Lactococcus lactis subsp. lactis (strain IL1403) (Streptococcus lactis)).